A 368-amino-acid chain; its full sequence is RNA polymerase sigma factor SigA (368 aa).

Residues 60 to 86 (VVDENGDPSEHSLKKDEKEAEKAQAED) are disordered. Positions 67–84 (PSEHSLKKDEKEAEKAQA) are enriched in basic and acidic residues. The interval 135 to 205 (LAEANLRLVV…TRAIADQART (71 aa)) is sigma-70 factor domain-2. The Interaction with polymerase core subunit RpoC motif lies at 159–162 (DLIQ). The sigma-70 factor domain-3 stretch occupies residues 214 to 290 (ETINKLIRIQ…DQDATSPAEH (77 aa)). The tract at residues 303–356 (VLDTLTDREENVLRLRFGLDDGRTRTLEEVGKVFGVTRERIRQIEAKALRKLRH) is sigma-70 factor domain-4. Positions 329–348 (LEEVGKVFGVTRERIRQIEA) form a DNA-binding region, H-T-H motif.

This sequence belongs to the sigma-70 factor family. RpoD/SigA subfamily. Interacts transiently with the RNA polymerase catalytic core.

The protein resides in the cytoplasm. Functionally, sigma factors are initiation factors that promote the attachment of RNA polymerase to specific initiation sites and are then released. This sigma factor is the primary sigma factor during exponential growth. In Enterococcus faecalis (strain ATCC 700802 / V583), this protein is RNA polymerase sigma factor SigA.